The sequence spans 436 residues: 3-ketoacyl-CoA thiolase (436 aa).

Cys-99 (acyl-thioester intermediate) is an active-site residue. Active-site proton acceptor residues include His-392 and Cys-422.

It belongs to the thiolase-like superfamily. Thiolase family. As to quaternary structure, heterotetramer of two alpha chains (FadJ) and two beta chains (FadI).

The protein resides in the cytoplasm. It carries out the reaction an acyl-CoA + acetyl-CoA = a 3-oxoacyl-CoA + CoA. It participates in lipid metabolism; fatty acid beta-oxidation. In terms of biological role, catalyzes the final step of fatty acid oxidation in which acetyl-CoA is released and the CoA ester of a fatty acid two carbons shorter is formed. The protein is 3-ketoacyl-CoA thiolase of Yersinia pestis bv. Antiqua (strain Angola).